Here is a 231-residue protein sequence, read N- to C-terminus: UMP-CMP kinase (231 aa).

57 to 62 (GSGKGT) contacts ATP. An NMP region spans residues 77-106 (SAGDLLRREIASGSAYGSVILSTIREGKIV). A ribonucleoside 5'-phosphate is bound by residues Arg83, 104 to 106 (KIV), and 131 to 134 (GFPR). CMP is bound at residue Asn138. The tract at residues 169 to 177 (NRNQGRVDD) is LID. ATP is bound at residue Arg170. Residues Arg174 and Arg185 each coordinate a ribonucleoside 5'-phosphate. ATP is bound at residue Gly213.

It belongs to the adenylate kinase family. UMP-CMP kinase subfamily. Monomer. The cofactor is Mg(2+).

It is found in the cytoplasm. The protein localises to the nucleus. It catalyses the reaction CMP + ATP = CDP + ADP. It carries out the reaction dCMP + ATP = dCDP + ADP. The catalysed reaction is UMP + ATP = UDP + ADP. Its function is as follows. Catalyzes the phosphorylation of pyrimidine nucleoside monophosphates at the expense of ATP. Plays an important role in de novo pyrimidine nucleotide biosynthesis. Has preference for UMP and CMP as phosphate acceptors. The sequence is that of UMP-CMP kinase from Prunus armeniaca (Apricot).